The chain runs to 82 residues: RNA-binding protein Hfq (82 aa).

Positions 10-70 (DIFLNGARKN…LSTITPSKAI (61 aa)) constitute a Sm domain.

It belongs to the Hfq family. Homohexamer.

In terms of biological role, RNA chaperone that binds small regulatory RNA (sRNAs) and mRNAs to facilitate mRNA translational regulation in response to envelope stress, environmental stress and changes in metabolite concentrations. Also binds with high specificity to tRNAs. In Clostridium kluyveri (strain NBRC 12016), this protein is RNA-binding protein Hfq.